Consider the following 196-residue polypeptide: MEIISLKRFILLMLATSSLLTSNIFCTDESRIPSLYSKKNYDKYSEPRGDLGWEKERSLTFEEVKDWGPKIKMNTPAVNKMPPSAANLPLRFGRNMEEERSTRVMAHLPLRLGKNREDSLSRRVPNLPQRFGRTIAAKSITKTLSNLLQQSMHSPSTNGLLYSMTCRPQEIQNPGQKNLRRLGFQKIDDAELKQEK.

Residues 1–21 (MEIISLKRFILLMLATSSLLT) form the signal peptide. A propeptide spanning residues 22–57 (SNIFCTDESRIPSLYSKKNYDKYSEPRGDLGWEKER) is cleaved from the precursor. Position 92 is a phenylalanine amide (F92). Propeptides lie at residues 95–99 (NMEEE) and 115–121 (NREDSLS). F131 is subject to Phenylalanine amide. The propeptide occupies 134–196 (TIAAKSITKT…IDDAELKQEK (63 aa)).

Belongs to the FARP (FMRFamide related peptide) family. As to expression, expressed in hypothalamus, where it is localized to the dorsomedial hypothalamic nucleus (DMH), paraventricular nucleus (PVN), and to neuronal projections from the PVN to the neurosecretory zone of the median eminence.

The protein resides in the secreted. In terms of biological role, may act in concert with kisspeptin, through opposing affects, to regulate the activity of gonadotropin-releasing hormone (GnRH) neurons across the seasons, leading to an annual change in fertility and the cyclical seasonal transition from non-breeding to breeding season. Functionally, efficiently inhibits forskolin-induced production of cAMP. Acts as a potent negative regulator of gonadotropin synthesis and secretion. Induces secretion of prolactin. Efficiently inhibits forskolin-induced production of cAMP. Blocks morphine-induced analgesia. Its function is as follows. Shows no inhibitory activity of forskolin-induced production of cAMP. This is Pro-FMRFamide-related neuropeptide VF from Ovis aries (Sheep).